We begin with the raw amino-acid sequence, 637 residues long: Zinc finger protein rsv2 (637 aa).

Disordered stretches follow at residues 1–41 (MDTT…SKMN), 145–164 (SNHQ…PTSA), 169–207 (IITA…QPFS), 221–363 (TGAI…STAL), 404–427 (QDSF…TRSY), and 440–558 (SVNP…GAQR). Over residues 172-189 (ANSSPSGNAGSNASASMS) the composition is skewed to low complexity. The segment covering 196–207 (PSASTINDQPFS) has biased composition (polar residues). Basic and acidic residues predominate over residues 279–296 (SDLKRSLGHNQKSDRVSK). Polar residues predominate over residues 298–344 (VSPQHQANPSTLNNPLKTQNFDSSKNLYTDNKDSSLVSPTGLQSRME). Composition is skewed to basic and acidic residues over residues 345-355 (QNPEVRAHPMK) and 404-413 (QDSFNKESIK). The span at 455-471 (VPSNTTISSSPPLTSPV) shows a compositional bias: low complexity. 2 stretches are compositionally biased toward polar residues: residues 472–498 (KTSA…QSAA) and 508–527 (YYNT…QKVS). The span at 544–554 (TTPTNSSTTAT) shows a compositional bias: low complexity. Residues 572-603 (VRCTLQNRVTGEICNTVFSRTYDLIRHQDTIH) form a C2H2-type 1 zinc finger. A C2H2-type 2; degenerate zinc finger spans residues 610 to 635 (FRCEICGDQRHFSRHDALVRHLRVKH).

It is found in the nucleus. The polypeptide is Zinc finger protein rsv2 (rsv2) (Schizosaccharomyces pombe (strain 972 / ATCC 24843) (Fission yeast)).